The sequence spans 369 residues: Allantoicase (369 aa).

The disordered stretch occupies residues 341–369 (PDSKNNNNNNNNNNNNNTSNSFKTSDRQQ). The span at 345–357 (NNNNNNNNNNNNN) shows a compositional bias: low complexity.

It belongs to the allantoicase family.

It catalyses the reaction allantoate + H2O = (S)-ureidoglycolate + urea. The protein operates within nitrogen metabolism; (S)-allantoin degradation; (S)-ureidoglycolate from allantoate (aminidohydrolase route): step 1/1. Its function is as follows. Utilization of purines as secondary nitrogen sources, when primary sources are limiting. This chain is Allantoicase (allC), found in Dictyostelium discoideum (Social amoeba).